A 393-amino-acid polypeptide reads, in one-letter code: MTDNFFHGARVKENTDLQTAINDVDSTVIGLVAVADDADATTFPLDTPVLITRVISVLGKAGKTGSLYKSLKAISDQVSTRVIVVRVAAAGTEDGAKTQSQLIIGGSQADGSYTGMFALLTAEQKVGYRPRILGVPMYDTQEVTAQLRVIAKQLRAFSYSYCDGCETIAEAKTYREQFAEREGMLIWPNFIAYNSVSGENEEFPAVAYALGLRAKIDNEQGWHKSLSNVAVSNVLGITKDVFWALQAEDSDANELNANEVTTLIKRDGFRFWGNRTTDKDEYIFEVYTRTAQILADTIAEAQFTTVDSPLTPANVKDVVSGINAKLQGLVTAGRLIGAACWFDIVDNPKTSIPQGKAVVRYNYSPVPPLEDLTMIQTFTDQYYEAAFASLGGA.

Belongs to the myoviridae tail sheath protein family.

It is found in the virion. Functionally, forms the virus contractile tail sheath. The sequence is that of Major tail sheath protein from Serratia phage KSP20 (Serratia marcescens bacteriophage KSP20).